Consider the following 158-residue polypeptide: Lipoprotein signal peptidase (158 aa).

The next 4 helical transmembrane spans lie at 7 to 27 (LFWI…YWVV), 38 to 58 (ILPG…FSLF), 67 to 87 (WLSL…PVLD), and 95 to 115 (GLIL…GYVV). Catalysis depends on residues aspartate 116 and aspartate 132. The chain crosses the membrane as a helical span at residues 125–145 (FAVFNMADSFISIGIVCLLLA).

Belongs to the peptidase A8 family.

The protein localises to the cell inner membrane. The catalysed reaction is Release of signal peptides from bacterial membrane prolipoproteins. Hydrolyzes -Xaa-Yaa-Zaa-|-(S,diacylglyceryl)Cys-, in which Xaa is hydrophobic (preferably Leu), and Yaa (Ala or Ser) and Zaa (Gly or Ala) have small, neutral side chains.. The protein operates within protein modification; lipoprotein biosynthesis (signal peptide cleavage). In terms of biological role, this protein specifically catalyzes the removal of signal peptides from prolipoproteins. The polypeptide is Lipoprotein signal peptidase (Nostoc sp. (strain PCC 7120 / SAG 25.82 / UTEX 2576)).